The sequence spans 385 residues: Polyketide synthase 3 (385 aa).

Residue Cys-157 is part of the active site.

The protein belongs to the thiolase-like superfamily. Chalcone/stilbene synthases family. Expressed in male and female flowers, and seedlings.

It localises to the cytoplasm. In terms of biological role, polyketide synthase responsible for the biosynthesis of secondary metabolites. This is Polyketide synthase 3 (PKSF3) from Cannabis sativa (Hemp).